Here is a 346-residue protein sequence, read N- to C-terminus: mRNA endoribonuclease LsoA (346 aa).

In terms of assembly, can form a complex with cognate antitoxin LsoB and with enterobacteria phage T4 antitoxin Dmd.

Functionally, toxic component of a type II toxin-antitoxin (TA) system. A stable (half-life over 20 minutes) endoribonuclease that degrades mRNA. Degradation may be translation-stimulated. Overexpression in the absence of cognate antitoxin LsoB causes retarded growth and mRNA degradation, this effect is mitigated upon coexpression with antitoxin LsoB or enterobacteria phage T4 Dmd. Degrades late enterobacteria phage T4 mRNAs, protecting the host against T4 reproduction. This is mRNA endoribonuclease LsoA (lsoA) from Escherichia coli O157:H7.